The following is a 396-amino-acid chain: Succinyl-CoA:mesaconate CoA-transferase (396 aa).

Asp175 serves as the catalytic Nucleophile.

The protein belongs to the CoA-transferase III family.

It carries out the reaction mesaconate + succinyl-CoA = 2-methylfumaryl-CoA + succinate. Functionally, involved in the methylaspartate cycle. Catalyzes the transfer of the CoA moiety from succinyl-CoA to mesaconate to generate mesaconyl-CoA (2-methylfumaryl-CoA) and succinate. This is Succinyl-CoA:mesaconate CoA-transferase from Haloarcula marismortui (strain ATCC 43049 / DSM 3752 / JCM 8966 / VKM B-1809) (Halobacterium marismortui).